The chain runs to 273 residues: DNA repair protein RecO (273 aa).

The interval 249-273 (GRSLTEEPELKAEQTEAEKESQRPR) is disordered. Residues 252–273 (LTEEPELKAEQTEAEKESQRPR) are compositionally biased toward basic and acidic residues.

It belongs to the RecO family.

Functionally, involved in DNA repair and RecF pathway recombination. The chain is DNA repair protein RecO from Heliobacterium modesticaldum (strain ATCC 51547 / Ice1).